Consider the following 447-residue polypeptide: Methylenetetrahydrofolate--tRNA-(uracil-5-)-methyltransferase TrmFO (447 aa).

FAD is bound at residue 8-13 (GGGLAG). The segment at 398–421 (NWGLVPAPPKRENGRRLGRQERRR) is disordered. Positions 406 to 417 (PKRENGRRLGRQ) are enriched in basic and acidic residues.

This sequence belongs to the MnmG family. TrmFO subfamily. Requires FAD as cofactor.

Its subcellular location is the cytoplasm. The enzyme catalyses uridine(54) in tRNA + (6R)-5,10-methylene-5,6,7,8-tetrahydrofolate + NADH + H(+) = 5-methyluridine(54) in tRNA + (6S)-5,6,7,8-tetrahydrofolate + NAD(+). It catalyses the reaction uridine(54) in tRNA + (6R)-5,10-methylene-5,6,7,8-tetrahydrofolate + NADPH + H(+) = 5-methyluridine(54) in tRNA + (6S)-5,6,7,8-tetrahydrofolate + NADP(+). Functionally, catalyzes the folate-dependent formation of 5-methyl-uridine at position 54 (M-5-U54) in all tRNAs. The sequence is that of Methylenetetrahydrofolate--tRNA-(uracil-5-)-methyltransferase TrmFO from Rubrobacter xylanophilus (strain DSM 9941 / JCM 11954 / NBRC 16129 / PRD-1).